The sequence spans 72 residues: Translation initiation factor IF-1 (72 aa).

Positions 1–72 (MSKEEVLEFS…TKGRITYRYK (72 aa)) constitute an S1-like domain.

Belongs to the IF-1 family. In terms of assembly, component of the 30S ribosomal translation pre-initiation complex which assembles on the 30S ribosome in the order IF-2 and IF-3, IF-1 and N-formylmethionyl-tRNA(fMet); mRNA recruitment can occur at any time during PIC assembly.

The protein resides in the cytoplasm. In terms of biological role, one of the essential components for the initiation of protein synthesis. Stabilizes the binding of IF-2 and IF-3 on the 30S subunit to which N-formylmethionyl-tRNA(fMet) subsequently binds. Helps modulate mRNA selection, yielding the 30S pre-initiation complex (PIC). Upon addition of the 50S ribosomal subunit IF-1, IF-2 and IF-3 are released leaving the mature 70S translation initiation complex. In Bartonella tribocorum (strain CIP 105476 / IBS 506), this protein is Translation initiation factor IF-1.